Reading from the N-terminus, the 359-residue chain is Protein RecA (359 aa).

An ATP-binding site is contributed by 69–76; sequence GPESSGKT. Positions 337-359 are disordered; that stretch reads SANSVAKASEEDEEEEVDLEPEE. Acidic residues predominate over residues 346–359; sequence EEDEEEEVDLEPEE.

Belongs to the RecA family.

The protein localises to the cytoplasm. Its function is as follows. Can catalyze the hydrolysis of ATP in the presence of single-stranded DNA, the ATP-dependent uptake of single-stranded DNA by duplex DNA, and the ATP-dependent hybridization of homologous single-stranded DNAs. It interacts with LexA causing its activation and leading to its autocatalytic cleavage. This is Protein RecA from Nostoc punctiforme (strain ATCC 29133 / PCC 73102).